A 411-amino-acid chain; its full sequence is Cladofulvin cluster transcriptional coactivator claA (411 aa).

Over residues 1–27 (MSDSLAGNGMRQNLNRSSTSSNHTGHA) the composition is skewed to polar residues. The segment at 1–32 (MSDSLAGNGMRQNLNRSSTSSNHTGHAQNGRA) is disordered. Residues 47 to 117 (LACQVQSLAC…DPGHIAHTAL (71 aa)) enclose the HTH iclR-type domain. The H-T-H motif DNA-binding region spans 77–96 (LHDVAELANVPASQLSRVVR).

The protein localises to the nucleus. In terms of biological role, transcriptional coactivator; part of the gene cluster that mediates the biosynthesis of cladofulvin, a conidial pigment not required for virulence but that plays a role in fitness and resistance to environmental stresses including UV light and low-temperature stress. With claE, coregulates the production of cladofulvin. This chain is Cladofulvin cluster transcriptional coactivator claA, found in Passalora fulva (Tomato leaf mold).